We begin with the raw amino-acid sequence, 203 residues long: uncharacterized protein (203 aa).

An N-terminal signal peptide occupies residues 1-23 (MKKIYKALISSLLLSTSINVAYA). The region spanning 24–87 (ETQYVTENLS…ILNSDLSSTP (64 aa)) is the SH3b domain. A helical membrane pass occupies residues 167-189 (IAIQWFIYGGSVLGVGLLFGLLI).

The protein to E.coli YgiM.

The protein resides in the membrane. This is an uncharacterized protein from Haemophilus influenzae (strain ATCC 51907 / DSM 11121 / KW20 / Rd).